The chain runs to 584 residues: Levansucrase (584 aa).

The first 30 residues, 1 to 30 (MAHVRRKVATLNMALAGSLLMVLGAQSALA), serve as a signal peptide directing secretion. Residue glutamine 31 is modified to Pyrrolidone carboxylic acid. Sucrose contacts are provided by tryptophan 134, aspartate 135, serine 225, arginine 308, and aspartate 309. Residue aspartate 135 is the Nucleophile of the active site. Cysteines 339 and 395 form a disulfide. Glutamate 401 functions as the Proton donor/acceptor in the catalytic mechanism.

The protein belongs to the glycosyl hydrolase 68 family. Monomer. Post-translationally, the N-terminus is blocked. The N-terminal Gln is cyclized to a pyroglutamic acid.

It is found in the secreted. The catalysed reaction is [6)-beta-D-fructofuranosyl-(2-&gt;](n) alpha-D-glucopyranoside + sucrose = [6)-beta-D-fructofuranosyl-(2-&gt;](n+1) alpha-D-glucopyranoside + D-glucose. Strongly inhibited by Hg(2+) and slightly activated by Co(2+). Not inhibited by the metal ion chelator EDTA, suggesting that this enzyme does not need a metal cofactor. Its function is as follows. Catalyzes the synthesis of levan, a fructose polymer, by transferring the fructosyl moiety from sucrose to a growing acceptor molecule. Also displays sucrose hydrolase activity. In vitro, catalyzes transfructosylation from sucrose to a variety of acceptors including water (sucrose hydrolysis), glucose (exchange reaction), fructan (polymerase reaction) and sucrose (oligofructoside synthesis). Levansucrase of G.diazotrophicus SRT4, unlike the enzyme of B.subtilis, causes accumulation of large quantities of tri- and tetrasaccharides but small quantities of high-molecular-mass levan. It may act more as a sucrose hydrolase than as a fructan polymerase, and may be the key enzyme in the sucrose metabolism of G.diazotrophicus SRT4. This is Levansucrase from Gluconacetobacter diazotrophicus (Acetobacter diazotrophicus).